The sequence spans 237 residues: Small ribosomal subunit protein uS2c (237 aa).

This sequence belongs to the universal ribosomal protein uS2 family.

The protein localises to the plastid. The chain is Small ribosomal subunit protein uS2c (rps2) from Epifagus virginiana (Beechdrops).